Consider the following 380-residue polypeptide: 1-deoxy-D-xylulose 5-phosphate reductoisomerase (380 aa).

NADPH-binding residues include Thr-9, Gly-10, Ser-11, Val-12, Arg-36, and Asn-117. Lys-118 provides a ligand contact to 1-deoxy-D-xylulose 5-phosphate. An NADPH-binding site is contributed by Glu-119. Asp-139 is a binding site for Mn(2+). 4 residues coordinate 1-deoxy-D-xylulose 5-phosphate: Ser-140, Glu-141, Ser-165, and His-188. A Mn(2+)-binding site is contributed by Glu-141. Position 194 (Gly-194) interacts with NADPH. 1-deoxy-D-xylulose 5-phosphate is bound by residues Ser-201, Asn-206, Lys-207, and Glu-210. Glu-210 contacts Mn(2+).

Belongs to the DXR family. Mg(2+) is required as a cofactor. It depends on Mn(2+) as a cofactor.

The enzyme catalyses 2-C-methyl-D-erythritol 4-phosphate + NADP(+) = 1-deoxy-D-xylulose 5-phosphate + NADPH + H(+). The protein operates within isoprenoid biosynthesis; isopentenyl diphosphate biosynthesis via DXP pathway; isopentenyl diphosphate from 1-deoxy-D-xylulose 5-phosphate: step 1/6. Its function is as follows. Catalyzes the NADPH-dependent rearrangement and reduction of 1-deoxy-D-xylulose-5-phosphate (DXP) to 2-C-methyl-D-erythritol 4-phosphate (MEP). This is 1-deoxy-D-xylulose 5-phosphate reductoisomerase from Aquifex aeolicus (strain VF5).